The primary structure comprises 133 residues: FPRL1 inhibitory protein (133 aa).

Positions 1–28 are cleaved as a signal peptide; it reads MKKNITKTIIASTVIAAGLLTQTNDAKA.

The protein belongs to the CHIPS/FLIPr family.

It is found in the secreted. In terms of biological role, may be involved in countering the first line of host defense mechanisms. Impairs the leukocyte response to FPRL1 agonists by binding directly to host FPRL1. Exerts, in vitro, anti-inflammatory activity by inhibiting calcium mobilization and cell migration toward chemoattractants. The chain is FPRL1 inhibitory protein (flr) from Staphylococcus aureus (strain Newman).